The sequence spans 1256 residues: Bifunctional autolysin (1256 aa).

Positions 1–29 (MAKKFNYKLPSMVALTLVGSAVTAHQVQA) are cleaved as a signal peptide. Polar residues predominate over residues 103–138 (GDTRANQSATTNNTQPVAKSTSTTAPKTNTNVTNAG). Disordered regions lie at residues 103-151 (GDTR…NSEN), 173-219 (AAAP…KYKP), and 419-440 (TQST…PSTG). 2 stretches are compositionally biased toward low complexity: residues 173-196 (AAAP…KVTT) and 421-439 (STTT…KPST). Residues 199-775 (ASAQPRSVAA…AVAQPKTAVK (577 aa)) are N-acetylmuramoyl-L-alanine amidase. 7 GW domains span residues 443 to 517 (TVAA…YNTA), 519 to 593 (SPVN…DTAK), 612 to 686 (TVSS…YNNA), 688 to 762 (SPVN…VPAA), 784 to 859 (TTQT…VQNL), 861 to 936 (KEVK…APTA), and 943 to 1017 (AAKD…KELI). The segment at 776-1256 (AYTVTKPQTT…GKYFDIPQYK (481 aa)) is endo-beta-N-acetylglucosaminidase.

In the N-terminal section; belongs to the N-acetylmuramoyl-L-alanine amidase 2 family. It in the C-terminal section; belongs to the glycosyl hydrolase 73 family. Oligomer; forms a ring structure at the cell surface which is important for efficient partitioning of daughter cells after cell division. In terms of processing, undergoes proteolytic processing to generate the two extracellular lytic enzymes, probably at the septal region on the cell surface.

The protein resides in the secreted. The enzyme catalyses Hydrolyzes the link between N-acetylmuramoyl residues and L-amino acid residues in certain cell-wall glycopeptides.. It catalyses the reaction an N(4)-(oligosaccharide-(1-&gt;3)-[oligosaccharide-(1-&gt;6)]-beta-D-Man-(1-&gt;4)-beta-D-GlcNAc-(1-&gt;4)-alpha-D-GlcNAc)-L-asparaginyl-[protein] + H2O = an oligosaccharide-(1-&gt;3)-[oligosaccharide-(1-&gt;6)]-beta-D-Man-(1-&gt;4)-D-GlcNAc + N(4)-(N-acetyl-beta-D-glucosaminyl)-L-asparaginyl-[protein]. Functionally, endohydrolysis of the di-N-acetylchitobiosyl unit in high-mannose glycopeptides and glycoproteins containing the -[(Man)5(GlcNAc)2]-Asn structure. One N-acetyl-D-glucosamine residue remains attached to the protein; the rest of the oligosaccharide is released intact. Cleaves the peptidoglycan connecting the daughter cells at the end of the cell division cycle, resulting in the separation of the two newly divided cells. Acts as an autolysin in penicillin-induced lysis. The sequence is that of Bifunctional autolysin (atl) from Staphylococcus aureus (strain MW2).